Reading from the N-terminus, the 589-residue chain is 2-succinyl-5-enolpyruvyl-6-hydroxy-3-cyclohexene-1-carboxylate synthase (589 aa).

The protein belongs to the TPP enzyme family. MenD subfamily. As to quaternary structure, homodimer. Mg(2+) serves as cofactor. Requires Mn(2+) as cofactor. Thiamine diphosphate is required as a cofactor.

The enzyme catalyses isochorismate + 2-oxoglutarate + H(+) = 5-enolpyruvoyl-6-hydroxy-2-succinyl-cyclohex-3-ene-1-carboxylate + CO2. It participates in quinol/quinone metabolism; 1,4-dihydroxy-2-naphthoate biosynthesis; 1,4-dihydroxy-2-naphthoate from chorismate: step 2/7. Its pathway is quinol/quinone metabolism; menaquinone biosynthesis. Catalyzes the thiamine diphosphate-dependent decarboxylation of 2-oxoglutarate and the subsequent addition of the resulting succinic semialdehyde-thiamine pyrophosphate anion to isochorismate to yield 2-succinyl-5-enolpyruvyl-6-hydroxy-3-cyclohexene-1-carboxylate (SEPHCHC). The protein is 2-succinyl-5-enolpyruvyl-6-hydroxy-3-cyclohexene-1-carboxylate synthase of Myxococcus xanthus (strain DK1622).